Consider the following 1233-residue polypeptide: Structural maintenance of chromosomes protein 1A (1233 aa).

Gly-32 to Ser-39 contacts ATP. Coiled coils occupy residues Glu-104–Leu-124 and Glu-163–Ile-503. Over residues Ile-284–Gln-293 the composition is skewed to basic and acidic residues. Disordered regions lie at residues Ile-284 to Lys-308 and Gln-348 to Glu-369. Phosphoserine is present on residues Ser-358 and Ser-360. The SMC hinge domain occupies Val-515 to Ala-629. An N6-acetyllysine mark is found at Lys-648 and Lys-713. Positions Lys-660–Met-935 form a coiled coil. The disordered stretch occupies residues Met-947 to Ser-966. A compositionally biased stretch (low complexity) spans Glu-953–Ser-966. Residue Ser-957 is modified to Phosphoserine; by ATM. Ser-962 is subject to Phosphoserine. Ser-966 is modified (phosphoserine; by ATM and ATR). A Phosphoserine modification is found at Ser-970. The stretch at Lys-991–Asp-1068 forms a coiled coil. Residue Lys-1037 is modified to N6-acetyllysine.

This sequence belongs to the SMC family. SMC1 subfamily. As to quaternary structure, forms a heterodimer with SMC3 in cohesin complexes. Cohesin complexes are composed of the SMC1 (SMC1A or SMC1B) and SMC3 heterodimer attached via their SMC hinge domain, RAD21 which link them, and one STAG protein (STAG1, STAG2 or STAG3), which interacts with RAD21. In germ cell cohesin complexes, SMC1A is mutually exclusive with SMC1B. Interacts with BRCA1. Found in a complex with CDCA5, SMC3 and RAD21, PDS5A/SCC-112 and PDS5B/APRIN. Interacts with NDC80. Interacts with BRAT1. Found in a complex containing POLE and SMC3. Interacts with RPGR, STAG3 and SYCP2. The cohesin complex interacts with the cohesin loading complex subunits NIPBL/Scc2 (via HEAT repeats) and MAU2/Scc4. NIPBL directly contacts all members of the complex, RAD21, SMC1A/B, SMC3 and STAG1. Post-translationally, ubiquitinated by the DCX(DCAF15) complex, leading to its degradation. In terms of processing, phosphorylated by ATM upon ionizing radiation in a NBS1-dependent manner. Phosphorylated by ATR upon DNA methylation in a MSH2/MSH6-dependent manner. Phosphorylation of Ser-957 and Ser-966 activates it and is required for S-phase checkpoint activation.

The protein resides in the nucleus. It is found in the chromosome. The protein localises to the centromere. Its subcellular location is the kinetochore. In terms of biological role, involved in chromosome cohesion during cell cycle and in DNA repair. Central component of cohesin complex. The cohesin complex is required for the cohesion of sister chromatids after DNA replication. The cohesin complex apparently forms a large proteinaceous ring within which sister chromatids can be trapped. At anaphase, the complex is cleaved and dissociates from chromatin, allowing sister chromatids to segregate. The cohesin complex may also play a role in spindle pole assembly during mitosis. Involved in DNA repair via its interaction with BRCA1 and its related phosphorylation by ATM, or via its phosphorylation by ATR. Works as a downstream effector both in the ATM/NBS1 branch and in the ATR/MSH2 branch of S-phase checkpoint. The protein is Structural maintenance of chromosomes protein 1A (SMC1A) of Homo sapiens (Human).